A 505-amino-acid chain; its full sequence is Histidine ammonia-lyase (505 aa).

A cross-link (5-imidazolinone (Ala-Gly)) is located at residues 141–143 (ASG). A 2,3-didehydroalanine (Ser) modification is found at S142.

This sequence belongs to the PAL/histidase family. In terms of processing, contains an active site 4-methylidene-imidazol-5-one (MIO), which is formed autocatalytically by cyclization and dehydration of residues Ala-Ser-Gly.

The protein resides in the cytoplasm. The catalysed reaction is L-histidine = trans-urocanate + NH4(+). The protein operates within amino-acid degradation; L-histidine degradation into L-glutamate; N-formimidoyl-L-glutamate from L-histidine: step 1/3. The sequence is that of Histidine ammonia-lyase from Bacillus cereus (strain G9842).